The following is a 182-amino-acid chain: MIESENPNTLDEPVIQTILRDLKMIGFKLYHVILPRGNAANVLRDWDLWGPLILCLVMAIFLSISAEEQKALEFTIVFVVVWCGAAIVTVNGQLLCGNISFFQSVCILGYCIFPLTIATIIIWIIQNFTMIVKLPIVGGAWFWSSFASYGFLGSSVPESRRLLAVYPVLLFYLVIAWLVVVQ.

The Cytoplasmic portion of the chain corresponds to 1–45 (MIESENPNTLDEPVIQTILRDLKMIGFKLYHVILPRGNAANVLRD). A helical membrane pass occupies residues 46–66 (WDLWGPLILCLVMAIFLSISA). Residues 67-70 (EEQK) lie on the Lumenal side of the membrane. Residues 71 to 91 (ALEFTIVFVVVWCGAAIVTVN) form a helical membrane-spanning segment. Residues 92–104 (GQLLCGNISFFQS) are Cytoplasmic-facing. Residues 105–125 (VCILGYCIFPLTIATIIIWII) traverse the membrane as a helical segment. Residues 126–133 (QNFTMIVK) are Lumenal-facing. The chain crosses the membrane as a helical span at residues 134 to 154 (LPIVGGAWFWSSFASYGFLGS). Topologically, residues 155 to 161 (SVPESRR) are cytoplasmic. A helical transmembrane segment spans residues 162–182 (LLAVYPVLLFYLVIAWLVVVQ).

The protein belongs to the YIP1 family.

It localises to the golgi apparatus membrane. The protein is Protein YIPF6 homolog (yipf6) of Dictyostelium discoideum (Social amoeba).